Reading from the N-terminus, the 128-residue chain is Large ribosomal subunit protein eL22 (128 aa).

It belongs to the eukaryotic ribosomal protein eL22 family. Component of the large ribosomal subunit.

It localises to the cytoplasm. Its function is as follows. Component of the large ribosomal subunit. The ribosome is a large ribonucleoprotein complex responsible for the synthesis of proteins in the cell. This Ictalurus punctatus (Channel catfish) protein is Large ribosomal subunit protein eL22 (rpl22).